Here is a 243-residue protein sequence, read N- to C-terminus: Transmembrane protein 174 (243 aa).

2 consecutive transmembrane segments (helical) span residues 40 to 60 (LLFS…MGWI) and 73 to 93 (LLGP…VCKF). Positions 205–229 (AGHDRPSSDADQLEGTQMGEEERVC) are disordered.

In terms of assembly, interacts with SLC34A1; regulates SLC34A1 internalization by PTH and FGF23.

It localises to the endoplasmic reticulum membrane. Its subcellular location is the apical cell membrane. Regulator of plasma phosphate homeostasis. Decreases serum inorganic phosphate (Pi) uptake by regulating the sodium-phosphate cotransporter SLC34A1 trafficking by PTH and FGF23 in the kidney. This Rattus norvegicus (Rat) protein is Transmembrane protein 174 (Tmem174).